The sequence spans 115 residues: Non-specific lipid-transfer protein 4.3 (115 aa).

An N-terminal signal peptide occupies residues 1-25 (MARAAATQLVLVAMVAAMLLVATDA). Cystine bridges form between cysteine 29-cysteine 77, cysteine 39-cysteine 54, cysteine 55-cysteine 97, and cysteine 75-cysteine 111.

Belongs to the plant LTP family.

Plant non-specific lipid-transfer proteins transfer phospholipids as well as galactolipids across membranes. May play a role in wax or cutin deposition in the cell walls of expanding epidermal cells and certain secretory tissues. In Hordeum vulgare (Barley), this protein is Non-specific lipid-transfer protein 4.3 (LTP4.3).